We begin with the raw amino-acid sequence, 223 residues long: Transmembrane protein 235 (223 aa).

Positions 1 to 28 (MARLGALLLAAALGALLSFALLAAAVAS) are cleaved as a signal peptide. A glycan (N-linked (GlcNAc...) asparagine) is linked at Asn41. 3 helical membrane passes run 96–116 (VIVV…CGLL), 126–146 (LLFT…GVSI), and 176–196 (WSMA…TLLL).

Belongs to the PMP-22/EMP/MP20 family. Post-translationally, N-glycosylated.

Its subcellular location is the membrane. The protein localises to the endoplasmic reticulum. The chain is Transmembrane protein 235 (TMEM235) from Homo sapiens (Human).